Reading from the N-terminus, the 115-residue chain is U3-lycotoxin-Ls1q (115 aa).

Residues 1 to 20 (MKFVLLFGVLLVTLFSYSSA) form the signal peptide. Residues 21–44 (EMFDDFDQADEDELLSLIEKEEAR) constitute a propeptide that is removed on maturation. 4 disulfides stabilise this stretch: C48–C63, C55–C72, C62–C87, and C74–C85.

The protein belongs to the neurotoxin 19 (CSTX) family. 01 subfamily. In terms of tissue distribution, expressed by the venom gland.

Its subcellular location is the secreted. The chain is U3-lycotoxin-Ls1q from Lycosa singoriensis (Wolf spider).